The primary structure comprises 583 residues: Putative glutaminase 3 (583 aa).

A disordered region spans residues 1 to 29 (MDNKEKEDEELSDELKDQPGPSEKPRTPT). Substrate is bound by residues Ser216, Asn265, Glu311, Asn318, Tyr344, Tyr396, and Val414. ANK repeat units lie at residues 482–514 (DGQN…CKDY), 515–548 (DDRT…PCDR), and 549–581 (YDRT…LKGQ).

The protein belongs to the glutaminase family.

It catalyses the reaction L-glutamine + H2O = L-glutamate + NH4(+). The polypeptide is Putative glutaminase 3 (glna-3) (Caenorhabditis elegans).